We begin with the raw amino-acid sequence, 143 residues long: Transcriptional regulator MraZ (143 aa).

SpoVT-AbrB domains lie at 5–47 (SHAP…PMAE) and 76–119 (AADD…DAQR).

It belongs to the MraZ family. As to quaternary structure, forms oligomers.

It localises to the cytoplasm. The protein localises to the nucleoid. The protein is Transcriptional regulator MraZ of Frankia casuarinae (strain DSM 45818 / CECT 9043 / HFP020203 / CcI3).